The following is a 240-amino-acid chain: Dephospho-CoA kinase domain-containing protein (240 aa).

A DPCK domain is found at Leu-3 to Leu-207. Gly-8–Ser-15 is a binding site for ATP.

The protein belongs to the CoaE family.

The sequence is that of Dephospho-CoA kinase domain-containing protein (Dcakd) from Rattus norvegicus (Rat).